We begin with the raw amino-acid sequence, 163 residues long: NADH-quinone oxidoreductase subunit B (163 aa).

[4Fe-4S] cluster is bound by residues C32, C33, C98, and C127.

This sequence belongs to the complex I 20 kDa subunit family. NDH-1 is composed of 14 different subunits. Subunits NuoB, C, D, E, F, and G constitute the peripheral sector of the complex. [4Fe-4S] cluster serves as cofactor.

Its subcellular location is the cell inner membrane. It catalyses the reaction a quinone + NADH + 5 H(+)(in) = a quinol + NAD(+) + 4 H(+)(out). Its function is as follows. NDH-1 shuttles electrons from NADH, via FMN and iron-sulfur (Fe-S) centers, to quinones in the respiratory chain. Couples the redox reaction to proton translocation (for every two electrons transferred, four hydrogen ions are translocated across the cytoplasmic membrane), and thus conserves the redox energy in a proton gradient. The sequence is that of NADH-quinone oxidoreductase subunit B from Pelobacter propionicus (strain DSM 2379 / NBRC 103807 / OttBd1).